The following is a 457-amino-acid chain: Argininosuccinate lyase (457 aa).

The protein belongs to the lyase 1 family. Argininosuccinate lyase subfamily.

It is found in the cytoplasm. It catalyses the reaction 2-(N(omega)-L-arginino)succinate = fumarate + L-arginine. It participates in amino-acid biosynthesis; L-arginine biosynthesis; L-arginine from L-ornithine and carbamoyl phosphate: step 3/3. This is Argininosuccinate lyase from Haemophilus influenzae (strain PittEE).